The primary structure comprises 630 residues: Ubiquitin carboxyl-terminal hydrolase MINDY-2 (630 aa).

Residues 1–209 (MESGPESLQP…RVPEEEEGAA (209 aa)) form a disordered region. Residues 24-33 (GSPQEGQQET) are compositionally biased toward polar residues. At serine 94 the chain carries Phosphoserine. 2 stretches are compositionally biased toward low complexity: residues 141–163 (EESAAAGSSEPSSGGGLSSSCSD) and 170–191 (SPSLDSLESFSNLHSFPSSSEF). The Nucleophile role is filled by cysteine 267. The active-site Proton acceptor is histidine 449. The ubiquitin-binding domain (UBD) stretch occupies residues 508-560 (GQQDQIDQDYLMALSLQQEQQSQEINWEQIPEGISDLELAKKLQEEEDRRASQ). Residues 564 to 599 (EQEQAAAAAASASASASASASTQAPQSQPVQASPSS) are compositionally biased toward low complexity. Positions 564-630 (EQEQAAAAAA…EKEKNSCVIL (67 aa)) are disordered. Positions 606–630 (SERKRKEPREKDKEKEKEKNSCVIL) are enriched in basic and acidic residues.

It belongs to the MINDY deubiquitinase family. FAM63 subfamily.

The enzyme catalyses Thiol-dependent hydrolysis of ester, thioester, amide, peptide and isopeptide bonds formed by the C-terminal Gly of ubiquitin (a 76-residue protein attached to proteins as an intracellular targeting signal).. Functionally, hydrolase that can remove 'Lys-48'-linked conjugated ubiquitin from proteins. Can also bind to polyubiquitin chains of different linkage types, including 'Lys-6', 'Lys-11', 'Lys-29', 'Lys-33' and 'Lys-63'. May play a regulatory role at the level of protein turnover. This Bos taurus (Bovine) protein is Ubiquitin carboxyl-terminal hydrolase MINDY-2 (MINDY2).